Reading from the N-terminus, the 1451-residue chain is Murinoglobulin-2 (1451 aa).

The signal sequence occupies residues 1–27 (MWKSRRAQLCLFSVLLAFLPSASSLNG). Intrachain disulfides connect Cys48–Cys86, Cys251–Cys276, and Cys269–Cys288. Asn55 is a glycosylation site (N-linked (GlcNAc...) asparagine). Asn294, Asn313, and Asn500 each carry an N-linked (GlcNAc...) asparagine glycan. Intrachain disulfides connect Cys461–Cys555, Cys587–Cys773, and Cys634–Cys680. Residues 677–734 (PKICFDSAPMSGPRGKFDLAFSSEVSGTLQKGSSKRPQPEEPPREDPPPKDPLAETIR) form a bait region region. The disordered stretch occupies residues 703–728 (GTLQKGSSKRPQPEEPPREDPPPKDP). Positions 713–728 (PQPEEPPREDPPPKDP) are enriched in basic and acidic residues. N-linked (GlcNAc...) asparagine glycans are attached at residues Asn749, Asn776, and Asn871. 4 cysteine pairs are disulfide-bonded: Cys849/Cys885, Cys923/Cys1274, Cys1081/Cys1104, and Cys1298/Cys1444. A cross-link (isoglutamyl cysteine thioester (Cys-Gln)) is located at residues 974–977 (CGEQ). An N-linked (GlcNAc...) asparagine glycan is attached at Asn1401.

Belongs to the protease inhibitor I39 (alpha-2-macroglobulin) family. As to quaternary structure, monomer. In terms of tissue distribution, plasma.

Its subcellular location is the secreted. In terms of biological role, a proteinase activates the inhibitor by specific proteolysis in the bait region, which, by an unknown mechanism leads to reaction at the cysteinyl-glutamyl internal thiol ester site and to a conformational change, whereby the proteinase is trapped and/or covalently bound to the inhibitor. While in the tetrameric proteinase inhibitors steric inhibition is sufficiently strong, monomeric forms need a covalent linkage between the activated glutamyl residue of the original thiol ester and a terminal amino group of a lysine or another nucleophilic group on the proteinase, for inhibition to be effective. In Mus musculus (Mouse), this protein is Murinoglobulin-2 (Mug2).